We begin with the raw amino-acid sequence, 466 residues long: Coagulation factor VII (466 aa).

The N-terminal stretch at Met1–Ala20 is a signal peptide. A propeptide spanning residues Ala21–Arg60 is cleaved from the precursor. The region spanning Ala61–Ser105 is the Gla domain. A 4-carboxyglutamate mark is found at Glu66, Glu67, Glu74, Glu76, Glu79, Glu80, Glu85, Glu86, Glu89, and Glu95. An intrachain disulfide couples Cys77 to Cys82. An EGF-like 1; calcium-binding domain is found at Asp106–Glu142. 10 cysteine pairs are disulfide-bonded: Cys110/Cys121, Cys115/Cys130, Cys132/Cys141, Cys151/Cys162, Cys158/Cys172, Cys174/Cys187, Cys195/Cys322, Cys219/Cys224, Cys238/Cys254, and Cys370/Cys389. O-linked (Glc...) serine; alternate glycosylation occurs at Ser112. An O-linked (Xyl...) serine; alternate glycan is attached at Ser112. An O-linked (Fuc) serine glycan is attached at Ser120. Asp123 is subject to (3R)-3-hydroxyaspartate. The EGF-like 2 domain occupies Asp147 to Thr188. N-linked (GlcNAc...) asparagine glycosylation is present at Asn205. The region spanning Ile213 to Arg452 is the Peptidase S1 domain. Catalysis depends on charge relay system residues His253 and Asp302. The N-linked (GlcNAc...) asparagine glycan is linked to Asn382. Substrate is bound at residue Asp398. Cysteines 400 and 428 form a disulfide. The Charge relay system role is filled by Ser404.

This sequence belongs to the peptidase S1 family. Heterodimer of a light chain and a heavy chain linked by a disulfide bond. Post-translationally, the vitamin K-dependent, enzymatic carboxylation of some glutamate residues allows the modified protein to bind calcium. In terms of processing, the iron and 2-oxoglutarate dependent 3-hydroxylation of aspartate and asparagine is (R) stereospecific within EGF domains. O-glycosylated. O-fucosylated by POFUT1 on a conserved serine or threonine residue found in the consensus sequence C2-X(4,5)-[S/T]-C3 of EGF domains, where C2 and C3 are the second and third conserved cysteines. Post-translationally, can be either O-glucosylated or O-xylosylated at Ser-112 by POGLUT1.

The protein resides in the secreted. It catalyses the reaction Selective cleavage of Arg-|-Ile bond in factor X to form factor Xa.. Its function is as follows. Initiates the extrinsic pathway of blood coagulation. Serine protease that circulates in the blood in a zymogen form. Factor VII is converted to factor VIIa by factor Xa, factor XIIa, factor IXa, or thrombin by minor proteolysis. In the presence of tissue factor and calcium ions, factor VIIa then converts factor X to factor Xa by limited proteolysis. Factor VIIa also converts factor IX to factor IXa in the presence of tissue factor and calcium. The sequence is that of Coagulation factor VII (F7) from Pan paniscus (Pygmy chimpanzee).